Here is a 191-residue protein sequence, read N- to C-terminus: Putative RNA-binding protein EEED8.4 (191 aa).

The 78-residue stretch at 55-132 (KSVFIGNVDF…RPIVVTAKRT (78 aa)) folds into the RRM domain. The tract at residues 136-160 (GMGHGVRGSSRGTFGRGRGAARGAP) is disordered.

The polypeptide is Putative RNA-binding protein EEED8.4 (Caenorhabditis elegans).